We begin with the raw amino-acid sequence, 100 residues long: Nucleoid-associated protein ckrop_0143 (100 aa).

It belongs to the YbaB/EbfC family. In terms of assembly, homodimer.

It localises to the cytoplasm. Its subcellular location is the nucleoid. In terms of biological role, binds to DNA and alters its conformation. May be involved in regulation of gene expression, nucleoid organization and DNA protection. The sequence is that of Nucleoid-associated protein ckrop_0143 from Corynebacterium kroppenstedtii (strain DSM 44385 / JCM 11950 / CIP 105744 / CCUG 35717).